Consider the following 108-residue polypeptide: uncharacterized protein (108 aa).

This is an uncharacterized protein from Saccharomyces cerevisiae (strain ATCC 204508 / S288c) (Baker's yeast).